We begin with the raw amino-acid sequence, 284 residues long: Bifunctional protein FolD (284 aa).

NADP(+)-binding positions include 166–168 (GAS) and isoleucine 232.

This sequence belongs to the tetrahydrofolate dehydrogenase/cyclohydrolase family. Homodimer.

It catalyses the reaction (6R)-5,10-methylene-5,6,7,8-tetrahydrofolate + NADP(+) = (6R)-5,10-methenyltetrahydrofolate + NADPH. The catalysed reaction is (6R)-5,10-methenyltetrahydrofolate + H2O = (6R)-10-formyltetrahydrofolate + H(+). Its pathway is one-carbon metabolism; tetrahydrofolate interconversion. In terms of biological role, catalyzes the oxidation of 5,10-methylenetetrahydrofolate to 5,10-methenyltetrahydrofolate and then the hydrolysis of 5,10-methenyltetrahydrofolate to 10-formyltetrahydrofolate. The chain is Bifunctional protein FolD from Shewanella sp. (strain W3-18-1).